Here is a 220-residue protein sequence, read N- to C-terminus: Octanoyltransferase (220 aa).

Residues 31–206 form the BPL/LPL catalytic domain; it reads DDTPDEVWLV…ELVTLLDYEQ (176 aa). Substrate is bound by residues 70–77, 137–139, and 150–152; these read RGGQVTYH, SLG, and GLA. The Acyl-thioester intermediate role is filled by cysteine 168.

This sequence belongs to the LipB family.

Its subcellular location is the cytoplasm. The catalysed reaction is octanoyl-[ACP] + L-lysyl-[protein] = N(6)-octanoyl-L-lysyl-[protein] + holo-[ACP] + H(+). It participates in protein modification; protein lipoylation via endogenous pathway; protein N(6)-(lipoyl)lysine from octanoyl-[acyl-carrier-protein]: step 1/2. Its function is as follows. Catalyzes the transfer of endogenously produced octanoic acid from octanoyl-acyl-carrier-protein onto the lipoyl domains of lipoate-dependent enzymes. Lipoyl-ACP can also act as a substrate although octanoyl-ACP is likely to be the physiological substrate. The polypeptide is Octanoyltransferase (Vibrio campbellii (strain ATCC BAA-1116)).